Reading from the N-terminus, the 427-residue chain is Indole diterpene prenyltransferase penD (427 aa).

An L-tryptophan-binding site is contributed by 77–78; the sequence is YV. Substrate-binding residues include arginine 99, lysine 186, tyrosine 188, arginine 259, lysine 261, tyrosine 263, tyrosine 344, tyrosine 409, and tyrosine 413.

The protein belongs to the tryptophan dimethylallyltransferase family.

The protein operates within secondary metabolite biosynthesis. In terms of biological role, indole diterpene prenyltransferase; part of the gene cluster that mediates the biosynthesis of the indole diterpenes penitrems. The geranylgeranyl diphosphate (GGPP) synthase penG catalyzes the first step in penitrem biosynthesis via conversion of farnesyl pyrophosphate and isopentyl pyrophosphate into geranylgeranyl pyrophosphate (GGPP). Condensation of indole-3-glycerol phosphate with GGPP by the prenyl transferase penC then forms 3-geranylgeranylindole (3-GGI). Epoxidation by the FAD-dependent monooxygenase penM leads to a epoxidized-GGI that is substrate of the terpene cyclase penB for cyclization to yield paspaline. Paspaline is subsequently converted to 13-desoxypaxilline by the cytochrome P450 monooxygenase penP, the latter being then converted to paxilline by the cytochrome P450 monooxygenase penQ. Paxilline is converted to beta-paxitriol via C-10 ketoreduction by the short-chain dehydrogenase PC-15 which can be monoprenylated at the C-20 by the indole diterpene prenyltransferase penD. A two-step elimination (acetylation and elimination) process performed by the O-acetyltransferase PC-16 and the P.simplicissimum ptmI-ortholog not yet identified in P.crustosum, leads to the production of the prenylated form of penijanthine. The FAD-linked oxidoreductase ptmO then converts the prenylated form of penijanthine into PC-M5 which is in turn transformed into PC-M4 by the aromatic dimethylallyltransferase PC-22. A series of oxidation steps involving 4 cytochrome P450 monooxygenases (PC-21, PC-05, PC-23, PC-20) and a FAD-dependent monooxygenase (PC-14) are required for the transformation of PC-M4 to penitrems A and E. Synthesis of these final products is proposed to proceed via penitrems D and C (PC-21, PC-05, PC-14) and penitrems B and F (PC-21, PC-05, PC-14, PC-23). The protein is Indole diterpene prenyltransferase penD of Penicillium crustosum (Blue mold fungus).